We begin with the raw amino-acid sequence, 224 residues long: UPF0758 protein Rpic_2712 (224 aa).

Positions 102–224 constitute an MPN domain; that stretch reads TFESAQSVKD…VYGFLEHGKM (123 aa). 3 residues coordinate Zn(2+): His173, His175, and Asp186. A JAMM motif motif is present at residues 173 to 186; sequence HNHPTGNTEPSESD.

This sequence belongs to the UPF0758 family.

The protein is UPF0758 protein Rpic_2712 of Ralstonia pickettii (strain 12J).